A 189-amino-acid chain; its full sequence is MKTLFKSLKITLVFCVFFSVFYILILWLFAQVAGPNKGNAEVATLDGKVVGAANVGQMFTKDIYFWGRPSCAGDGYDASSSSGSNKGPTNPEYLAEVEARIDTFLVHHPYLSRKDVPAEMVTASASGLDPNITPQCAYVQVKRVAQARGLTENQVKEIVDQSVEKPLLGIFGTEKINVLKLNIALEENK.

The chain crosses the membrane as a helical span at residues 10 to 30 (ITLVFCVFFSVFYILILWLFA).

This sequence belongs to the KdpC family. As to quaternary structure, the system is composed of three essential subunits: KdpA, KdpB and KdpC.

The protein localises to the cell inner membrane. Its function is as follows. Part of the high-affinity ATP-driven potassium transport (or Kdp) system, which catalyzes the hydrolysis of ATP coupled with the electrogenic transport of potassium into the cytoplasm. This subunit acts as a catalytic chaperone that increases the ATP-binding affinity of the ATP-hydrolyzing subunit KdpB by the formation of a transient KdpB/KdpC/ATP ternary complex. The sequence is that of Potassium-transporting ATPase KdpC subunit from Bacteroides thetaiotaomicron (strain ATCC 29148 / DSM 2079 / JCM 5827 / CCUG 10774 / NCTC 10582 / VPI-5482 / E50).